An 89-amino-acid chain; its full sequence is Small ribosomal subunit protein bS16 (89 aa).

It belongs to the bacterial ribosomal protein bS16 family.

This is Small ribosomal subunit protein bS16 from Nitrosomonas europaea (strain ATCC 19718 / CIP 103999 / KCTC 2705 / NBRC 14298).